Here is a 436-residue protein sequence, read N- to C-terminus: Trigger factor (436 aa).

The region spanning 163–248 (GDRVTVDFEG…VKKIEAANLP (86 aa)) is the PPIase FKBP-type domain.

This sequence belongs to the FKBP-type PPIase family. Tig subfamily.

The protein localises to the cytoplasm. The catalysed reaction is [protein]-peptidylproline (omega=180) = [protein]-peptidylproline (omega=0). In terms of biological role, involved in protein export. Acts as a chaperone by maintaining the newly synthesized protein in an open conformation. Functions as a peptidyl-prolyl cis-trans isomerase. This is Trigger factor from Delftia acidovorans (strain DSM 14801 / SPH-1).